The primary structure comprises 373 residues: 3 beta-hydroxysteroid dehydrogenase/Delta 5--&gt;4-isomerase (373 aa).

The active-site Proton acceptor is tyrosine 155. Lysine 159 contributes to the NAD(+) binding site. Residues 288–308 (ISLQYWLAFLLEIVSFLLSPI) form a helical membrane-spanning segment.

It belongs to the 3-beta-HSD family.

It is found in the endoplasmic reticulum membrane. The protein localises to the mitochondrion membrane. It catalyses the reaction a 3beta-hydroxy-Delta(5)-steroid + NAD(+) = a 3-oxo-Delta(5)-steroid + NADH + H(+). The catalysed reaction is a 3-oxo-Delta(5)-steroid = a 3-oxo-Delta(4)-steroid. The protein operates within lipid metabolism; steroid biosynthesis. Functionally, 3-beta-HSD is a bifunctional enzyme, that catalyzes the oxidative conversion of Delta(5)-ene-3-beta-hydroxy steroid, and the oxidative conversion of ketosteroids. The 3-beta-HSD enzymatic system plays a crucial role in the biosynthesis of all classes of hormonal steroids. The protein is 3 beta-hydroxysteroid dehydrogenase/Delta 5--&gt;4-isomerase (HSD3B) of Bos taurus (Bovine).